We begin with the raw amino-acid sequence, 64 residues long: Prokaryotic ubiquitin-like protein Pup (64 aa).

A disordered region spans residues 1–38 (MAQEQTKRGGGGGEDDDPTGSTAAGQERREKLTEETDD). The interval 21 to 58 (STAAGQERREKLTEETDDLLDEIDDVLEENAEDFVRAY) is ARC ATPase binding. Positions 23 to 52 (AAGQERREKLTEETDDLLDEIDDVLEENAE) form a coiled coil. At Gln-64 the chain carries Deamidated glutamine. Gln-64 is covalently cross-linked (Isoglutamyl lysine isopeptide (Gln-Lys) (interchain with K-? in acceptor proteins)).

It belongs to the prokaryotic ubiquitin-like protein family. Strongly interacts with the proteasome-associated ATPase ARC through a hydrophobic interface; the interacting region of Pup lies in its C-terminal half. There is one Pup binding site per ARC hexamer ring. In terms of processing, is modified by deamidation of its C-terminal glutamine to glutamate by the deamidase Dop, a prerequisite to the subsequent pupylation process.

It functions in the pathway protein degradation; proteasomal Pup-dependent pathway. Protein modifier that is covalently attached to lysine residues of substrate proteins, thereby targeting them for proteasomal degradation. The tagging system is termed pupylation. The chain is Prokaryotic ubiquitin-like protein Pup from Mycolicibacterium gilvum (strain PYR-GCK) (Mycobacterium gilvum (strain PYR-GCK)).